A 240-amino-acid chain; its full sequence is Large ribosomal subunit protein bL25 (240 aa).

The tract at residues 1–23 is disordered; that stretch reads MATVKELKATARPKAGKGAARAE. A compositionally biased stretch (low complexity) spans 10 to 19; that stretch reads TARPKAGKGA.

This sequence belongs to the bacterial ribosomal protein bL25 family. CTC subfamily. Part of the 50S ribosomal subunit; part of the 5S rRNA/L5/L18/L25 subcomplex. Contacts the 5S rRNA. Binds to the 5S rRNA independently of L5 and L18.

Its function is as follows. This is one of the proteins that binds to the 5S RNA in the ribosome where it forms part of the central protuberance. In Afipia carboxidovorans (strain ATCC 49405 / DSM 1227 / KCTC 32145 / OM5) (Oligotropha carboxidovorans), this protein is Large ribosomal subunit protein bL25.